The sequence spans 155 residues: Ribosome maturation factor RimP (155 aa).

The protein belongs to the RimP family.

Its subcellular location is the cytoplasm. Functionally, required for maturation of 30S ribosomal subunits. The protein is Ribosome maturation factor RimP of Listeria welshimeri serovar 6b (strain ATCC 35897 / DSM 20650 / CCUG 15529 / CIP 8149 / NCTC 11857 / SLCC 5334 / V8).